The following is a 386-amino-acid chain: MSAVMITRKITRKWEKLPGKNTFCCDGRVMMARQKGVFYLTLFLIVGTCSLFFAFECPYLAVHLSPAIPVFAVLLFVFVMAMLLRTSFSDPGVLPRALPEEANFIEMEIEAANGNVLAGQRPPPRIKNVQINNQIVKLKYCYTCKIFRPPRASHCSICDNCVDRFDHHCPWVGNCVGKRNYRYFYLFTLSLSLLTIYIFAFDIVHVVLRSVDSGFVNTLKETPGTVLEVLVCFFTLWSVVGLTGFHTYLISLNQTTNEDIKGSWSGKNRVQNPYSHKNIIKNCCEVLCGPTYPSVLDRRGLMLEDSCSSAPSNGATTVPVNKSSNPATQTTKSSAPLIPNEHTPDEAKPSICSGTQKSSSSPKEEKPSSPISPNAVAPAVIKESTH.

Residues 1–35 (MSAVMITRKITRKWEKLPGKNTFCCDGRVMMARQK) lie on the Cytoplasmic side of the membrane. The helical transmembrane segment at 36-56 (GVFYLTLFLIVGTCSLFFAFE) threads the bilayer. At 57 to 63 (CPYLAVH) the chain is on the lumenal side. The chain crosses the membrane as a helical span at residues 64–84 (LSPAIPVFAVLLFVFVMAMLL). Residues 85 to 183 (RTSFSDPGVL…NCVGKRNYRY (99 aa)) are Cytoplasmic-facing. The region spanning 139–189 (KYCYTCKIFRPPRASHCSICDNCVDRFDHHCPWVGNCVGKRNYRYFYLFTL) is the DHHC domain. Cysteine 169 serves as the catalytic S-palmitoyl cysteine intermediate. A helical transmembrane segment spans residues 184-204 (FYLFTLSLSLLTIYIFAFDIV). At 205-224 (HVVLRSVDSGFVNTLKETPG) the chain is on the lumenal side. The helical transmembrane segment at 225-245 (TVLEVLVCFFTLWSVVGLTGF) threads the bilayer. Topologically, residues 246 to 386 (HTYLISLNQT…APAVIKESTH (141 aa)) are cytoplasmic. Positions 306 to 334 (SCSSAPSNGATTVPVNKSSNPATQTTKSS) are enriched in polar residues. The segment at 306–386 (SCSSAPSNGA…APAVIKESTH (81 aa)) is disordered.

This sequence belongs to the DHHC palmitoyltransferase family. ERF2/ZDHHC9 subfamily.

The protein resides in the endoplasmic reticulum membrane. The protein localises to the golgi apparatus membrane. It catalyses the reaction L-cysteinyl-[protein] + hexadecanoyl-CoA = S-hexadecanoyl-L-cysteinyl-[protein] + CoA. In terms of biological role, palmitoyltransferase that catalyzes the addition of palmitate onto various protein substrates, such as ADRB2, GSDMD, HRAS, NRAS and CGAS. The protein is Palmitoyltransferase ZDHHC9 of Danio rerio (Zebrafish).